The sequence spans 392 residues: uncharacterized protein (392 aa).

Belongs to the hcp1 family.

This is an uncharacterized protein from Escherichia coli (strain K12).